A 659-amino-acid chain; its full sequence is DNA ligase (659 aa).

NAD(+)-binding positions include 32–36, 81–82, and Glu111; these read DFEYD and SL. The N6-AMP-lysine intermediate role is filled by Lys113. 4 residues coordinate NAD(+): Arg134, Glu168, Lys280, and Lys304. Zn(2+) is bound by residues Cys398, Cys401, Cys416, and Cys421. In terms of domain architecture, BRCT spans 585 to 655; sequence ETNSIYFQKR…KELNIPIINE (71 aa).

Belongs to the NAD-dependent DNA ligase family. LigA subfamily. The cofactor is Mg(2+). Mn(2+) is required as a cofactor.

The enzyme catalyses NAD(+) + (deoxyribonucleotide)n-3'-hydroxyl + 5'-phospho-(deoxyribonucleotide)m = (deoxyribonucleotide)n+m + AMP + beta-nicotinamide D-nucleotide.. DNA ligase that catalyzes the formation of phosphodiester linkages between 5'-phosphoryl and 3'-hydroxyl groups in double-stranded DNA using NAD as a coenzyme and as the energy source for the reaction. It is essential for DNA replication and repair of damaged DNA. In Mycoplasma genitalium (strain ATCC 33530 / DSM 19775 / NCTC 10195 / G37) (Mycoplasmoides genitalium), this protein is DNA ligase.